The following is a 667-amino-acid chain: Cylicin-1 (667 aa).

2 disordered regions span residues 121–251 (PYTH…SSNV) and 275–634 (SQNN…ILPS). Residues 129-172 (KKAESKKYKDDKKETALKKISKKDTGPHEVDEKPKRRNKADKTP) show a composition bias toward basic and acidic residues. Over residues 173 to 182 (SKSSHGSQLS) the composition is skewed to low complexity. Basic and acidic residues predominate over residues 187–197 (SKSETNPESKD). Residues 223-237 (STSTKKYSKSSKNNS) show a composition bias toward low complexity. Polar residues predominate over residues 238–251 (DAVSETCSKNSSNV). Composition is skewed to basic and acidic residues over residues 284–326 (KKDA…KDTE), 345–371 (SKKDKKKDAKKDAASDAESGDSKDAKK), 380–394 (SKKDNKKKDAKKDAE), 417–431 (SKKDDKKKDAKKDAE), 438–464 (GDSKNAKKDSKKGKKDDKKKDAKKDAV), 483–506 (SKKDKKDLKKDDQKKPAMKSKEST), 521–533 (SKKDTKKTAKKAT), 549–558 (KKTEMFKSSD), and 583–593 (DSKKDAVEPKR). 9 tandem repeats follow at residues 287 to 305 (AKKDAKGKGSDAESVDSKD), 306 to 337 (AKKDKKGATKDTKKGAKKDTESTDAESGDSKD), 338 to 368 (AKKGKKESKKDKKKDAKKDAASDAESGDSKD), 369 to 405 (AKKDSKKGKKDSKKDNKKKDAKKDAESTDAESGDSKD), 406 to 442 (AKKDSKKGKKDSKKDDKKKDAKKDAESTDAESGDSKN), 443 to 475 (AKKDSKKGKKDDKKKDAKKDAVSTDADSESEGD), 476 to 516 (AKKS…ESKK), 517 to 547 (VKRDSKKDTKKTAKKATESSGAESDVSSKRY), and 548 to 569 (LKKTEMFKSSDAESEESLFKPG). Residues 287–569 (AKKDAKGKGS…ESEESLFKPG (283 aa)) are 9 X approximate tandem repeats. Over residues 624-633 (PLPPCEPILP) the composition is skewed to pro residues.

In terms of assembly, interacts with proteins of spermatozoa head including ACTL7A, CCIN, FAM209A and SPACA1; the interactions may be necessary for proper acrosome attachment to the nuclear envelope. In terms of tissue distribution, testis.

The protein resides in the cytoplasm. The protein localises to the cytoskeleton. Its subcellular location is the perinuclear theca. It is found in the calyx. Functionally, plays a role in the establishment of normal sperm morphology during spermatogenesis and is required for acrosome attachment to the nuclear envelope. The protein is Cylicin-1 (CYLC1) of Bos taurus (Bovine).